Here is a 573-residue protein sequence, read N- to C-terminus: DEAD-box ATP-dependent RNA helicase 47A (573 aa).

The Q motif signature appears at 131-159; that stretch reads KSFEELGLPPLLIDRLNKEGLTAPTEVQS. A Helicase ATP-binding domain is found at 162 to 362; sequence IPIISQKHDA…RSWGHDPVLV (201 aa). 175-182 is an ATP binding site; the sequence is SYTGSGKT. The DEAD box signature appears at 293–296; the sequence is DEVD. Residues 421–565 enclose the Helicase C-terminal domain; it reads TLRRCIHALE…PCEFTEGKLL (145 aa).

It belongs to the DEAD box helicase family.

The catalysed reaction is ATP + H2O = ADP + phosphate + H(+). The chain is DEAD-box ATP-dependent RNA helicase 47A from Oryza sativa subsp. japonica (Rice).